The following is a 1372-amino-acid chain: DNA-directed RNA polymerase subunit beta' (1372 aa).

Residues Cys-69, Cys-71, Cys-84, and Cys-87 each coordinate Zn(2+). Positions 460, 462, and 464 each coordinate Mg(2+). Zn(2+) contacts are provided by Cys-808, Cys-882, Cys-889, and Cys-892.

Belongs to the RNA polymerase beta' chain family. The RNAP catalytic core consists of 2 alpha, 1 beta, 1 beta' and 1 omega subunit. When a sigma factor is associated with the core the holoenzyme is formed, which can initiate transcription. The cofactor is Mg(2+). It depends on Zn(2+) as a cofactor.

It carries out the reaction RNA(n) + a ribonucleoside 5'-triphosphate = RNA(n+1) + diphosphate. Functionally, DNA-dependent RNA polymerase catalyzes the transcription of DNA into RNA using the four ribonucleoside triphosphates as substrates. The protein is DNA-directed RNA polymerase subunit beta' of Rickettsia bellii (strain OSU 85-389).